Consider the following 1003-residue polypeptide: Glycine--tRNA ligase (1003 aa).

Residues 1-310 are glycine--tRNA ligase alpha subunit; sequence MSSQPLTLQT…VTPKKIPTIC (310 aa). The interval 311-1003 is glycine--tRNA ligase beta subunit; sequence QPEDFLLEIG…CFGFYAWGVL (693 aa).

This sequence belongs to the class-II aminoacyl-tRNA synthetase family.

It is found in the cytoplasm. The enzyme catalyses tRNA(Gly) + glycine + ATP = glycyl-tRNA(Gly) + AMP + diphosphate. The chain is Glycine--tRNA ligase (glyQS) from Chlamydia trachomatis serovar D (strain ATCC VR-885 / DSM 19411 / UW-3/Cx).